Reading from the N-terminus, the 198-residue chain is Cytokinin riboside 5'-monophosphate phosphoribohydrolase (198 aa).

Residues Glu-91, 109–110, 126–132, and Thr-138 contribute to the substrate site; these read RK and GVGTAEE.

It belongs to the LOG family.

It catalyses the reaction N(6)-(dimethylallyl)adenosine 5'-phosphate + H2O = N(6)-dimethylallyladenine + D-ribose 5-phosphate. The catalysed reaction is 9-ribosyl-trans-zeatin 5'-phosphate + H2O = trans-zeatin + D-ribose 5-phosphate. Catalyzes the hydrolytic removal of ribose 5'-monophosphate from nitrogen N6-modified adenosines, the final step of bioactive cytokinin synthesis. This is Cytokinin riboside 5'-monophosphate phosphoribohydrolase (fas6) from Rhodococcoides fascians (Rhodococcus fascians).